A 458-amino-acid polypeptide reads, in one-letter code: Alpha-2C adrenergic receptor (458 aa).

At 1-51 (MASPALAAALAAAAAEGPNGSDAGEWGSGGGANASGTDWGPPPGQYSAGAV) the chain is on the extracellular side. 2 N-linked (GlcNAc...) asparagine glycosylation sites follow: N19 and N33. Residues 52-76 (AGLAAVVGFLIVFTVVGNVLVVIAV) form a helical membrane-spanning segment. Over 77–88 (LTSRALRAPQNL) the chain is Cytoplasmic. A helical membrane pass occupies residues 89-114 (FLVSLASADILVATLVMPFSLANELM). The Extracellular portion of the chain corresponds to 115-124 (AYWYFGQVWC). A disulfide bridge connects residues C124 and C202. Residues 125-147 (GVYLALDVLFCTSSIVHLCAISL) form a helical membrane-spanning segment. The Cytoplasmic portion of the chain corresponds to 148–168 (DRYWSVTQAVEYNLKRTPRRV). Residues 169–191 (KATIVAVWLISAVISFPPLVSFY) traverse the membrane as a helical segment. Residues 192–207 (RRPDGAAYPQCGLNDE) lie on the Extracellular side of the membrane. The chain crosses the membrane as a helical span at residues 208 to 231 (TWYILSSCIGSFFAPCLIMGLVYA). The Cytoplasmic segment spans residues 232–379 (RIYRVAKLRT…QAREKRFTFV (148 aa)). Residues 245-343 (SEKRGPAGPD…SPGPGGRLSR (99 aa)) form a disordered region. Residues 291–303 (RRRRRGALRRGGR) show a composition bias toward basic residues. A helical membrane pass occupies residues 380-403 (LAVVMGVFVLCWFPFFFSYSLYGI). At 404–416 (CREACQLPEPLFK) the chain is on the extracellular side. The helical transmembrane segment at 417–437 (FFFWIGYCNSSLNPVIYTVFN) threads the bilayer. Residues 438-458 (QDFRRSFKHILFRRRRRGFRQ) are Cytoplasmic-facing.

The protein belongs to the G-protein coupled receptor 1 family. Adrenergic receptor subfamily. ADRA2C sub-subfamily.

It is found in the cell membrane. In terms of biological role, alpha-2 adrenergic receptors mediate the catecholamine-induced inhibition of adenylate cyclase through the action of G proteins. The protein is Alpha-2C adrenergic receptor (Adra2c) of Rattus norvegicus (Rat).